Reading from the N-terminus, the 512-residue chain is ATP synthase subunit alpha (512 aa).

Position 169–176 (169–176 (GDRQTGKT)) interacts with ATP.

It belongs to the ATPase alpha/beta chains family. F-type ATPases have 2 components, CF(1) - the catalytic core - and CF(0) - the membrane proton channel. CF(1) has five subunits: alpha(3), beta(3), gamma(1), delta(1), epsilon(1). CF(0) has three main subunits: a(1), b(2) and c(9-12). The alpha and beta chains form an alternating ring which encloses part of the gamma chain. CF(1) is attached to CF(0) by a central stalk formed by the gamma and epsilon chains, while a peripheral stalk is formed by the delta and b chains.

Its subcellular location is the cell inner membrane. The catalysed reaction is ATP + H2O + 4 H(+)(in) = ADP + phosphate + 5 H(+)(out). Its function is as follows. Produces ATP from ADP in the presence of a proton gradient across the membrane. The alpha chain is a regulatory subunit. The polypeptide is ATP synthase subunit alpha (Azoarcus sp. (strain BH72)).